Here is a 944-residue protein sequence, read N- to C-terminus: Trehalose monomycolate exporter MmpL3 (944 aa).

Residues 1–13 are Cytoplasmic-facing; that stretch reads MFAWWGRTVYRYR. The helical transmembrane segment at 14-34 threads the bilayer; it reads FIVIGVMVALCLGGGVFGLSL. Over 35-185 the chain is Periplasmic; sequence GKHVTQSGFY…TIATDQRRME (151 aa). 40 to 44 is an a 1,2-diacylglycero-3-phosphoethanolamine binding site; the sequence is QSGFY. Residues 186–206 form a helical membrane-spanning segment; the sequence is VLALPLVAVVLFFVFGGVIAA. The Cytoplasmic segment spans residues 207–209; it reads GLP. A helical membrane pass occupies residues 210–230; the sequence is VMVGGLCIAGALGIMRFLAIF. Residues 231-235 lie on the Periplasmic side of the membrane; sequence GPVHY. A helical membrane pass occupies residues 236–256; the sequence is FAQPVVSLIGLGIAIDYGLFI. Residues 257–286 are Cytoplasmic-facing; that stretch reads VSRFREEIAEGYDTETAVRRTVITAGRTVT. Residues 287 to 307 traverse the membrane as a helical segment; that stretch reads FSAVLIVASAIGLLLFPQGFL. Topologically, residues 308–314 are periplasmic; the sequence is KSLTYAT. The chain crosses the membrane as a helical span at residues 315–335; sequence IASVMLSAILSITVLPACLGI. At 336–396 the chain is on the cytoplasmic side; the sequence is LGKHVDALGV…KLVNRVMKRP (61 aa). The chain crosses the membrane as a helical span at residues 397–417; it reads VLFAAPIVIIMILLIIPVGKL. Over 418–562 the chain is Periplasmic; that stretch reads SLGGISEKYL…HGLFAKMPLM (145 aa). The helical transmembrane segment at 563-583 threads the bilayer; the sequence is VVILLTTTIVLMFLAFGSVVL. The Cytoplasmic portion of the chain corresponds to 584-586; sequence PIK. A helical transmembrane segment spans residues 587–607; it reads ATLMSALTLGSTMGILTWIFV. Over 608 to 616 the chain is Periplasmic; it reads DGHFSKWLN. A helical transmembrane segment spans residues 617 to 637; it reads FTPTPLTAPVIGLIIALVFGL. Residues 638–672 lie on the Cytoplasmic side of the membrane; the sequence is STDYEVFLVSRMVEARERGMSTQEAIRIGTAATGR. The helical transmembrane segment at 673–693 threads the bilayer; sequence IITAAALIVAVVAGAFVFSDL. Residues 694-698 are Periplasmic-facing; the sequence is VMMKY. The helical transmembrane segment at 699–719 threads the bilayer; the sequence is LAFGLMAALLLDATVVRMFLV. Residues 720 to 944 are Cytoplasmic-facing; that stretch reads PSVMKLLGDD…QDLLRREGRL (225 aa). A disordered region spans residues 778–944; it reads AAGDPRPPHD…QDLLRREGRL (167 aa). Positions 791–828 are enriched in low complexity; that stretch reads PLAESPRPARSSPASSPELTPALEATAAPAAPSGASTT. Residues 829–839 are compositionally biased toward polar residues; the sequence is RMQIGSSTEPP. Residues 855–866 show a composition bias toward pro residues; sequence STPPPTPTPPSA.

This sequence belongs to the resistance-nodulation-cell division (RND) (TC 2.A.6) family. MmpL subfamily. Monomer. Interacts with TtfA (via N-terminus); active trehalose monomycolate (TMM) biosynthesis is not required for the complex formation.

It is found in the cell inner membrane. It localises to the cell septum. Its subcellular location is the cell tip. Inhibited by the antitubercular drug SQ109. Also inhibited by several other compounds such as the pyrrole derivative BM212, the adamantyl urea derivative AU1235, the benzimidazole C215, indoleamides, tetrahydropyrazolo[1,5-a]pyrimidine-3-carboxamide (THPP) and N-benzyl-6',7'-dihydrospiro[piperidine-4,4'-thieno[3,2-c]pyran] (Spiro) analogs. Inhibitory effects of these compounds, including SQ109, are most likely due to their ability to dissipate the transmembrane electrochemical proton gradient. Transports trehalose monomycolate (TMM) to the cell wall. Flips TMM across the inner membrane. Membrane potential is not required for this function. Transports probably phosphatidylethanolamine (PE) as well. Binds specifically both TMM and PE, but not trehalose dimycolate (TDM). Also binds diacylglycerol (DAG) and other phospholipids, including phosphatidylglycerol (PG), phosphatidylinositol (PI), and cardiolipin (CDL). Contributes to membrane potential, cell wall composition, antibiotic susceptibility and fitness. Could also be part of a heme-iron acquisition system. Functionally, is the target of the antitubercular drug SQ109. The polypeptide is Trehalose monomycolate exporter MmpL3 (mmpL3) (Mycobacterium tuberculosis (strain ATCC 25618 / H37Rv)).